A 1144-amino-acid polypeptide reads, in one-letter code: Adenylate cyclase type 3 (1144 aa).

Topologically, residues 1 to 79 (MTEDQGFSDP…FKRQRHETLL (79 aa)) are cytoplasmic. 5 consecutive transmembrane segments (helical) span residues 80-100 (VLVVFAALFDCYVVVMCAVVF), 105-125 (LAPLMVAGVGLVLDIILFVLC), 139-159 (VPYLLWLLITAQIFSYLGLNF), 173-193 (AFFVFSFFITLPLSLSPIVII), and 226-246 (ILANVFLYLCAIIVGIMSYYM). Residues aspartate 324, isoleucine 325, and aspartate 368 each contribute to the Mg(2+) site. Residues 324–329 (DIVGFT) and 366–368 (LGD) contribute to the ATP site. Residues 381–401 (EDHAVCSILMGLAMVEAISYV) form a helical membrane-spanning segment. Residues 402 to 630 (REKTKTGVDM…RYSVEKEKQS (229 aa)) are Cytoplasmic-facing. Arginine 412 provides a ligand contact to ATP. Lysine 465 is covalently cross-linked (Glycyl lysine isopeptide (Lys-Gly) (interchain with G-Cter in SUMO3)). The disordered stretch occupies residues 504 to 563 (QNGLNGSALPNGAPASKPSSPALIETKEPNGSAHASGSTSEEAEEQEAQADNPSFPNPRR). Residue serine 523 is modified to Phosphoserine. Residues 534–543 (GSAHASGSTS) are compositionally biased toward low complexity. Serine 578 carries the phosphoserine modification. 3 helical membrane passes run 631 to 651 (GAAFSCSCVVLFCTAMVEILI), 662 to 682 (FVVGEVLLLILTICSMAAIFP), and 706 to 726 (WAMLAIFILVMANVVDMLSCL). Asparagine 734 carries an N-linked (GlcNAc...) asparagine glycan. Helical transmembrane passes span 755-775 (VAVLSLIATIMLVQVSHMVKL), 777-797 (LMLLVTGAVTAINLYAWCPVF), and 833-853 (LPLVPSKYSMTVMMFVMMLSF). Residues 854-1144 (YYFSRHVEKL…TLPHQVVDNP (291 aa)) lie on the Cytoplasmic side of the membrane. Residues lysine 975, 1062–1064 (DIW), and 1069–1073 (NVASR) contribute to the ATP site. At serine 1076 the chain carries Phosphoserine; by CaMK2. Lysine 1109 is an ATP binding site.

Belongs to the adenylyl cyclase class-4/guanylyl cyclase family. Requires Mg(2+) as cofactor. Mn(2+) is required as a cofactor. In terms of processing, N-glycosylated. Sumoylated. Sumoylation is required for targeting ot olfactory cilia. Post-translationally, rapidly phosphorylated after stimulation by odorants or forskolin. Phosphorylation by CaMK2 at Ser-1076 down-regulates enzyme activity. In terms of tissue distribution, detected on cilia on the olfactory epithelium (at protein level). Detected on cilia on the olfactory epithelium.

It localises to the cell membrane. It is found in the golgi apparatus. The protein localises to the cell projection. The protein resides in the cilium. Its subcellular location is the cytoplasm. The catalysed reaction is ATP = 3',5'-cyclic AMP + diphosphate. Specifically activated by the G alpha protein GNAL/G(olf) in signaling cascades triggered by odorant receptors. Activated by forskolin. After forskolin treatment, activity is further increased by calcium/calmodulin. In the absence of forskolin, calcium/calmodulin has little effect on enzyme activity. In terms of biological role, catalyzes the formation of the signaling molecule cAMP in response to G-protein signaling. Participates in signaling cascades triggered by odorant receptors via its function in cAMP biosynthesis: specifically activated by G alpha protein GNAL/G(olf) in olfactory epithelium. Required for the perception of odorants. Required for normal sperm motility and normal male fertility. Plays a role in regulating insulin levels and body fat accumulation in response to a high fat diet. This chain is Adenylate cyclase type 3, found in Rattus norvegicus (Rat).